A 342-amino-acid chain; its full sequence is Ubiquitin fusion degradation protein 1 homolog (342 aa).

Disordered stretches follow at residues 245–276 and 318–342; these read FGGAGRRLDGKKKPSSSVSLSDGTGVSTSNAA and EKEASKAGQPSNVFRGGNRTLRGAR. Residues 259-275 are compositionally biased toward polar residues; that stretch reads SSSVSLSDGTGVSTSNA.

This sequence belongs to the UFD1 family. As to quaternary structure, forms a complex composed of ubxn-3, ufd-1, npl-4.1 and cdc-48.1; within the complex interacts with cdc-48.1. Interacts with cdc-48.2. Interacts with npl-4.1 and/or npl-4.2.

The protein localises to the cytoplasm. It localises to the nucleus. Functions at a post-ubiquitination step in the ubiquitin fusion degradation (UFD) pathway. In association with npl-4.1 and/or npl-4.2 and ATPase cdc-48.1 and/or cdc-48.2, involved in the cytoplasmic elimination of misfolded proteins exported from the ER. This pathway, known as ERAD, prevents the activation of the unfolded protein response (UPR) caused by the accumulation of misfolded proteins in the ER. During S phase and in association with npl-4.1 and/or npl-4.2, cdc-48.1 and/or cdc-48.2 and ubxn-3, ensures the degradation of DNA licensing factor cdt-1 after the initiation of DNA replication and thus the disassembly of the DNA replication CMG helicase complex by promoting the dissociation from chromatin of several of its components including cdc-45 and sld-5. Regulates ubxn-3 nuclear localization during S phase. This Caenorhabditis elegans protein is Ubiquitin fusion degradation protein 1 homolog (ufd-1).